We begin with the raw amino-acid sequence, 37 residues long: Large ribosomal subunit protein bL36c (37 aa).

The protein belongs to the bacterial ribosomal protein bL36 family.

The protein resides in the plastid. Its subcellular location is the chloroplast. The polypeptide is Large ribosomal subunit protein bL36c (Mesembryanthemum crystallinum (Common ice plant)).